Here is a 311-residue protein sequence, read N- to C-terminus: Aspartate carbamoyltransferase catalytic subunit (311 aa).

Residues R55 and T56 each coordinate carbamoyl phosphate. K85 contributes to the L-aspartate binding site. Residues R106, H135, and Q138 each contribute to the carbamoyl phosphate site. R168 and R230 together coordinate L-aspartate. The carbamoyl phosphate site is built by L268 and P269.

This sequence belongs to the aspartate/ornithine carbamoyltransferase superfamily. ATCase family. Heterododecamer (2C3:3R2) of six catalytic PyrB chains organized as two trimers (C3), and six regulatory PyrI chains organized as three dimers (R2).

The catalysed reaction is carbamoyl phosphate + L-aspartate = N-carbamoyl-L-aspartate + phosphate + H(+). It participates in pyrimidine metabolism; UMP biosynthesis via de novo pathway; (S)-dihydroorotate from bicarbonate: step 2/3. Its function is as follows. Catalyzes the condensation of carbamoyl phosphate and aspartate to form carbamoyl aspartate and inorganic phosphate, the committed step in the de novo pyrimidine nucleotide biosynthesis pathway. The sequence is that of Aspartate carbamoyltransferase catalytic subunit from Citrobacter koseri (strain ATCC BAA-895 / CDC 4225-83 / SGSC4696).